The sequence spans 56 residues: Small ribosomal subunit protein uS14 (56 aa).

Zn(2+) is bound by residues cysteine 21, cysteine 24, cysteine 39, and cysteine 42.

This sequence belongs to the universal ribosomal protein uS14 family. As to quaternary structure, component of the 40S small ribosomal subunit. It depends on Zn(2+) as a cofactor.

Its subcellular location is the cytoplasm. It localises to the cytosol. The protein localises to the rough endoplasmic reticulum. This Lysiphlebus testaceipes (Greenbugs aphid parastoid) protein is Small ribosomal subunit protein uS14 (RpS29).